A 463-amino-acid chain; its full sequence is Chromogranin-A (463 aa).

The first 18 residues, 1-18 (MRSTAVLALLLCAGQVFA), serve as a signal peptide directing secretion. A disulfide bond links cysteine 35 and cysteine 56. The disordered stretch occupies residues 88–440 (KERAQQPLKQ…ANRRAEDQEL (353 aa)). The span at 92-116 (QQPLKQQQPPKQQQQQQQQQQQEQQ) shows a compositional bias: low complexity. Phosphoserine is present on serine 119. The segment covering 134 to 160 (DAKHRDAAAEVPSRDTMEKRKDSDKGQ) has biased composition (basic and acidic residues). The segment covering 196–208 (TATNTQSPTSLPS) has biased composition (polar residues). Phosphoserine occurs at positions 220, 282, and 308. Residues 301-310 (GKGELEHSQQ) are compositionally biased toward basic and acidic residues. Glycine 329 carries the glycine amide modification. Composition is skewed to basic and acidic residues over residues 331 to 340 (KGRELEHKQE) and 348 to 375 (RLSR…KRLE). Phosphoserine occurs at positions 350 and 383. A Methionine sulfoxide modification is found at methionine 384. The span at 409 to 437 (SSREDSVEARSDFEEKKEEEGSANRRAED) shows a compositional bias: basic and acidic residues. 3 positions are modified to phosphoserine: serine 410, serine 414, and serine 430. Serine 430 carries O-linked (Xyl...) (chondroitin sulfate) serine glycosylation. Pyrrolidone carboxylic acid is present on glutamine 438. A Phosphoserine modification is found at serine 444.

Belongs to the chromogranin/secretogranin protein family. As to quaternary structure, self-interacts; self-assembly is promoted in vitro by chondroitin sulfate attachment which occurs at mildly acidic pH conditions. Interacts with SCG3; this interaction is optimal in conditions mimicking the lumenal milieu of the trans-Golgi network, i.e. pH 5.5 and 10 mM Ca(+2). Interacts with ITPR1 in the secretory granules. Post-translationally, O-glycosylated; contains chondroitin sulfate (CS). CS attachment is pH-dependent, being observed at mildly acidic conditions of pH 5 but not at neutral pH, and promotes self-assembly in vitro.

The protein localises to the cytoplasmic vesicle. It is found in the secretory vesicle. The protein resides in the neuronal dense core vesicle. It localises to the secreted. Strongly inhibits glucose induced insulin release from the pancreas. Its function is as follows. Inhibits catecholamine release from chromaffin cells and noradrenergic neurons by acting as a non-competitive nicotinic cholinergic antagonist. Can induce mast cell migration, degranulation and production of cytokines and chemokines. In terms of biological role, regulates granule biogenesis in endocrine cells by up-regulating the transcription of protease nexin 1 (SERPINE2) via a cAMP-PKA-SP1 pathway. This leads to inhibition of granule protein degradation in the Golgi complex which in turn promotes granule formation. Pyroglutaminated (pGlu)-serpinin exerts an antiapoptotic effect on cells exposed to oxidative stress. This chain is Chromogranin-A (Chga), found in Mus musculus (Mouse).